A 286-amino-acid chain; its full sequence is Bifunctional protein FolD (286 aa).

NADP(+) contacts are provided by residues G165–S167 and S190.

Belongs to the tetrahydrofolate dehydrogenase/cyclohydrolase family. In terms of assembly, homodimer.

The catalysed reaction is (6R)-5,10-methylene-5,6,7,8-tetrahydrofolate + NADP(+) = (6R)-5,10-methenyltetrahydrofolate + NADPH. It catalyses the reaction (6R)-5,10-methenyltetrahydrofolate + H2O = (6R)-10-formyltetrahydrofolate + H(+). It participates in one-carbon metabolism; tetrahydrofolate interconversion. Functionally, catalyzes the oxidation of 5,10-methylenetetrahydrofolate to 5,10-methenyltetrahydrofolate and then the hydrolysis of 5,10-methenyltetrahydrofolate to 10-formyltetrahydrofolate. This Paraburkholderia phytofirmans (strain DSM 17436 / LMG 22146 / PsJN) (Burkholderia phytofirmans) protein is Bifunctional protein FolD.